Here is a 312-residue protein sequence, read N- to C-terminus: Protein dif-1 (312 aa).

Solcar repeat units lie at residues 2 to 93 (SDVL…GKWL), 102 to 193 (MTFI…LKKK), and 203 to 289 (LSPG…TLAA). Helical transmembrane passes span 5–25 (LLNF…GHPF), 69–89 (MAAP…GCAV), 104–124 (FIQN…VMVP), 172–192 (TLLR…YLKK), 209–229 (LMAG…ADVL), and 261–282 (LFKG…CFFG).

This sequence belongs to the mitochondrial carrier (TC 2.A.29) family.

Its subcellular location is the mitochondrion inner membrane. Seems to play a role in the maintenance of tissue differentiation in the developing embryo, but not for its initiation. The sequence is that of Protein dif-1 (dif-1) from Caenorhabditis elegans.